The primary structure comprises 169 residues: Cytochrome c oxidase subunit 4 isoform 1, mitochondrial (169 aa).

The transit peptide at 1-22 (MLATRVFSLIGRRAISTSVCVR) directs the protein to the mitochondrion. The Mitochondrial matrix portion of the chain corresponds to 23–98 (AHGSVVKSED…SFAEMNRSTN (76 aa)). Lysine 29 is modified (N6-acetyllysine; alternate). Position 29 is an N6-succinyllysine; alternate (lysine 29). An N6-acetyllysine modification is found at lysine 53. Residues serine 56 and serine 58 each carry the phosphoserine modification. Position 60 is an N6-acetyllysine; alternate (lysine 60). Position 60 is an N6-succinyllysine; alternate (lysine 60). Residue lysine 67 is modified to N6-acetyllysine. A helical membrane pass occupies residues 99 to 124 (EWKTVVGAAMFFIGFTALLLIWEKHY). Topologically, residues 125 to 169 (VYGPIPHTFEEEWVAKQTKRMLDMKVAPIQGFSAKWDYDKNEWKK) are mitochondrial intermembrane.

Belongs to the cytochrome c oxidase IV family. Component of the cytochrome c oxidase (complex IV, CIV), a multisubunit enzyme composed of 14 subunits. The complex is composed of a catalytic core of 3 subunits MT-CO1, MT-CO2 and MT-CO3, encoded in the mitochondrial DNA, and 11 supernumerary subunits COX4I1 (or COX4I2), COX5A, COX5B, COX6A2 (or COX6A1), COX6B1 (or COX6B2), COX6C, COX7A1 (or COX7A2), COX7B, COX7C, COX8B and NDUFA4, which are encoded in the nuclear genome. The complex exists as a monomer or a dimer and forms supercomplexes (SCs) in the inner mitochondrial membrane with NADH-ubiquinone oxidoreductase (complex I, CI) and ubiquinol-cytochrome c oxidoreductase (cytochrome b-c1 complex, complex III, CIII), resulting in different assemblies (supercomplex SCI(1)III(2)IV(1) and megacomplex MCI(2)III(2)IV(2)). Interacts with PHB2; the interaction decreases in absence of SPHK2. Interacts with AFG1L. Interacts with ABCB7; this interaction allows the regulation of cellular iron homeostasis and cellular reactive oxygen species (ROS) levels in cardiomyocytes. Interacts with FLVCR2; this interaction occurs in the absence of heme and is disrupted upon heme binding. Interacts with IRGC.

The protein resides in the mitochondrion inner membrane. It functions in the pathway energy metabolism; oxidative phosphorylation. Functionally, component of the cytochrome c oxidase, the last enzyme in the mitochondrial electron transport chain which drives oxidative phosphorylation. The respiratory chain contains 3 multisubunit complexes succinate dehydrogenase (complex II, CII), ubiquinol-cytochrome c oxidoreductase (cytochrome b-c1 complex, complex III, CIII) and cytochrome c oxidase (complex IV, CIV), that cooperate to transfer electrons derived from NADH and succinate to molecular oxygen, creating an electrochemical gradient over the inner membrane that drives transmembrane transport and the ATP synthase. Cytochrome c oxidase is the component of the respiratory chain that catalyzes the reduction of oxygen to water. Electrons originating from reduced cytochrome c in the intermembrane space (IMS) are transferred via the dinuclear copper A center (CU(A)) of subunit 2 and heme A of subunit 1 to the active site in subunit 1, a binuclear center (BNC) formed by heme A3 and copper B (CU(B)). The BNC reduces molecular oxygen to 2 water molecules using 4 electrons from cytochrome c in the IMS and 4 protons from the mitochondrial matrix. The protein is Cytochrome c oxidase subunit 4 isoform 1, mitochondrial (COX4I1) of Bos taurus (Bovine).